The sequence spans 45 residues: Photosystem II reaction center protein K (45 aa).

The propeptide occupies 1-8 (MFSINFLG). A helical transmembrane segment spans residues 17–37 (FDPIVDVLPIIPLLFLLLAFV).

The protein belongs to the PsbK family. As to quaternary structure, PSII is composed of 1 copy each of membrane proteins PsbA, PsbB, PsbC, PsbD, PsbE, PsbF, PsbH, PsbI, PsbJ, PsbK, PsbL, PsbM, PsbT, PsbY, PsbZ, Psb30/Ycf12, at least 3 peripheral proteins of the oxygen-evolving complex and a large number of cofactors. It forms dimeric complexes.

It localises to the plastid. Its subcellular location is the chloroplast thylakoid membrane. Its function is as follows. One of the components of the core complex of photosystem II (PSII). PSII is a light-driven water:plastoquinone oxidoreductase that uses light energy to abstract electrons from H(2)O, generating O(2) and a proton gradient subsequently used for ATP formation. It consists of a core antenna complex that captures photons, and an electron transfer chain that converts photonic excitation into a charge separation. The polypeptide is Photosystem II reaction center protein K (Euglena viridis (Cercaria viridis)).